The primary structure comprises 691 residues: Elongation factor G (691 aa).

Residues 8-283 form the tr-type G domain; sequence EDYRNFGIMA…AVVDFLPSPI (276 aa). Residues 17-24, 81-85, and 135-138 each bind GTP; these read AHIDAGKT, DTPGH, and NKMD.

It belongs to the TRAFAC class translation factor GTPase superfamily. Classic translation factor GTPase family. EF-G/EF-2 subfamily.

The protein localises to the cytoplasm. Catalyzes the GTP-dependent ribosomal translocation step during translation elongation. During this step, the ribosome changes from the pre-translocational (PRE) to the post-translocational (POST) state as the newly formed A-site-bound peptidyl-tRNA and P-site-bound deacylated tRNA move to the P and E sites, respectively. Catalyzes the coordinated movement of the two tRNA molecules, the mRNA and conformational changes in the ribosome. The protein is Elongation factor G of Xanthobacter autotrophicus (strain ATCC BAA-1158 / Py2).